The following is a 338-amino-acid chain: Ornithine carbamoyltransferase (338 aa).

Carbamoyl phosphate is bound by residues 56–59, Arg-107, and 134–137; these read STRT and HPTQ. L-ornithine-binding positions include Asn-168, Asp-232, and 236-237; that span reads SM. Residues 274–275 and Arg-320 contribute to the carbamoyl phosphate site; that span reads CL.

It belongs to the aspartate/ornithine carbamoyltransferase superfamily. OTCase family.

Its subcellular location is the cytoplasm. The catalysed reaction is carbamoyl phosphate + L-ornithine = L-citrulline + phosphate + H(+). It functions in the pathway amino-acid biosynthesis; L-arginine biosynthesis; L-arginine from L-ornithine and carbamoyl phosphate: step 1/3. Functionally, reversibly catalyzes the transfer of the carbamoyl group from carbamoyl phosphate (CP) to the N(epsilon) atom of ornithine (ORN) to produce L-citrulline. In Buchnera aphidicola subsp. Schizaphis graminum (strain Sg), this protein is Ornithine carbamoyltransferase (argI).